Consider the following 256-residue polypeptide: 1-(5-phosphoribosyl)-5-[(5-phosphoribosylamino)methylideneamino] imidazole-4-carboxamide isomerase (256 aa).

Asp8 acts as the Proton acceptor in catalysis. The active-site Proton donor is Asp129.

The protein belongs to the HisA/HisF family.

The protein localises to the cytoplasm. It catalyses the reaction 1-(5-phospho-beta-D-ribosyl)-5-[(5-phospho-beta-D-ribosylamino)methylideneamino]imidazole-4-carboxamide = 5-[(5-phospho-1-deoxy-D-ribulos-1-ylimino)methylamino]-1-(5-phospho-beta-D-ribosyl)imidazole-4-carboxamide. It functions in the pathway amino-acid biosynthesis; L-histidine biosynthesis; L-histidine from 5-phospho-alpha-D-ribose 1-diphosphate: step 4/9. This is 1-(5-phosphoribosyl)-5-[(5-phosphoribosylamino)methylideneamino] imidazole-4-carboxamide isomerase from Synechococcus elongatus (strain ATCC 33912 / PCC 7942 / FACHB-805) (Anacystis nidulans R2).